Reading from the N-terminus, the 203-residue chain is Urease accessory protein UreG (203 aa).

Position 14-21 (14-21) interacts with GTP; the sequence is GPVGSGKT.

It belongs to the SIMIBI class G3E GTPase family. UreG subfamily. As to quaternary structure, homodimer. UreD, UreF and UreG form a complex that acts as a GTP-hydrolysis-dependent molecular chaperone, activating the urease apoprotein by helping to assemble the nickel containing metallocenter of UreC. The UreE protein probably delivers the nickel.

The protein resides in the cytoplasm. Functionally, facilitates the functional incorporation of the urease nickel metallocenter. This process requires GTP hydrolysis, probably effectuated by UreG. The protein is Urease accessory protein UreG of Rhizobium etli (strain CIAT 652).